A 220-amino-acid chain; its full sequence is Ribose-5-phosphate isomerase A (220 aa).

Substrate is bound by residues 28–31, 81–84, and 94–97; these read TGST, DGAD, and KGGG. Glutamate 103 serves as the catalytic Proton acceptor. Residue lysine 121 participates in substrate binding.

This sequence belongs to the ribose 5-phosphate isomerase family. In terms of assembly, homodimer.

It carries out the reaction aldehydo-D-ribose 5-phosphate = D-ribulose 5-phosphate. Its pathway is carbohydrate degradation; pentose phosphate pathway; D-ribose 5-phosphate from D-ribulose 5-phosphate (non-oxidative stage): step 1/1. Functionally, catalyzes the reversible conversion of ribose-5-phosphate to ribulose 5-phosphate. In Aromatoleum aromaticum (strain DSM 19018 / LMG 30748 / EbN1) (Azoarcus sp. (strain EbN1)), this protein is Ribose-5-phosphate isomerase A.